Reading from the N-terminus, the 91-residue chain is Hepcidin-1 (91 aa).

The first 24 residues, 1-24 (MKLSNVFLAAVVILTCVCVFQITA), serve as a signal peptide directing secretion. Residues 25–64 (VPFIQQVQDEHHVESEELQENQHLTEAEHRQTDPLVLFRT) constitute a propeptide that is removed on maturation. Disulfide bonds link Cys73/Cys89, Cys76/Cys79, Cys77/Cys85, and Cys80/Cys88.

Belongs to the hepcidin family.

It is found in the secreted. Seems to act as a signaling molecule involved in the maintenance of iron homeostasis. Seems to be required in conjunction with HFE to regulate both intestinal iron absorption and iron storage in macrophages. May also have antimicrobial activity. The sequence is that of Hepcidin-1 (hamp1) from Danio rerio (Zebrafish).